The following is a 75-amino-acid chain: Exodeoxyribonuclease 7 small subunit (75 aa).

The protein belongs to the XseB family. As to quaternary structure, heterooligomer composed of large and small subunits.

Its subcellular location is the cytoplasm. It carries out the reaction Exonucleolytic cleavage in either 5'- to 3'- or 3'- to 5'-direction to yield nucleoside 5'-phosphates.. Functionally, bidirectionally degrades single-stranded DNA into large acid-insoluble oligonucleotides, which are then degraded further into small acid-soluble oligonucleotides. The chain is Exodeoxyribonuclease 7 small subunit from Thermotoga maritima (strain ATCC 43589 / DSM 3109 / JCM 10099 / NBRC 100826 / MSB8).